We begin with the raw amino-acid sequence, 994 residues long: Seizure protein 6 homolog (994 aa).

The N-terminal stretch at 1–19 (MRPVALLLLPSLLALLAHG) is a signal peptide. Residues 20 to 925 (LSLEAPTVGK…AASSTLDAAH (906 aa)) are Extracellular-facing. The tract at residues 28–50 (GKGQAPGIEETDGELTAAPTPEQ) is disordered. O-glycosylated at two sites regions lie at residues 38–47 (TDGELTAAPT) and 59–63 (TTAPT). Disordered regions lie at residues 88–146 (LRPA…ESES), 171–191 (IAST…PGDM), and 241–261 (PGPC…PTDL). A compositionally biased stretch (pro residues) spans 93 to 107 (PFQPDPPAPFTPSPL). Composition is skewed to polar residues over residues 112–123 (NQDSRPVFTSPT) and 172–185 (ASTT…TPTQ). N-linked (GlcNAc...) asparagine glycosylation is present at asparagine 289. A Sushi 1 domain is found at 355-414 (LSCHFPRRPAYGDVTVTSLHPGGSARFHCATGYQLKGARHLTCLNATQPFWDSKEPVCIA). Cystine bridges form between cysteine 357/cysteine 397, cysteine 383/cysteine 412, cysteine 416/cysteine 443, cysteine 532/cysteine 574, cysteine 559/cysteine 589, cysteine 593/cysteine 619, cysteine 710/cysteine 752, cysteine 738/cysteine 765, cysteine 771/cysteine 813, cysteine 799/cysteine 830, cysteine 838/cysteine 880, and cysteine 866/cysteine 895. N-linked (GlcNAc...) asparagine glycosylation is found at asparagine 399, asparagine 436, and asparagine 541. One can recognise a CUB 1 domain in the interval 416-527 (CGGVIRNATT…AGMALRYEAF (112 aa)). The Sushi 2 domain maps to 530-591 (GHCYEPFVKY…WNETEPACRA (62 aa)). Residues 593–704 (CSGEITDSAG…QGFVIHFFEV (112 aa)) form the CUB 2 domain. Sushi domains lie at 708-767 (DTCP…SCQR), 769-832 (TSCH…KCLL), and 836-897 (KPCH…ICRA). Residues 926–946 (IAAAIFLPLVAMVLLVGGVYF) traverse the membrane as a helical segment. Topologically, residues 947–994 (YFSRLQGKSSLQLPRPRPRPYNRITIESAFDNPTYETGSLSFAGDERI) are cytoplasmic.

This sequence belongs to the SEZ6 family. Glycosylated.

It localises to the cell membrane. Its function is as follows. May play a role in cell-cell recognition and in neuronal membrane signaling. Seems to be important for the achievement of the necessary balance between dendrite elongation and branching during the elaboration of a complex dendritic arbor. Involved in the development of appropriate excitatory synaptic connectivity. In Homo sapiens (Human), this protein is Seizure protein 6 homolog (SEZ6).